The following is an 81-amino-acid chain: Delta-conotoxin PVIA (81 aa).

The first 22 residues, 1–22, serve as a signal peptide directing secretion; that stretch reads MKLTCVMIVAVLFLTAWTFVTA. The propeptide occupies 23 to 49; that stretch reads DDSKNGLENHFWKARDEMKNREASKLD. 3 disulfides stabilise this stretch: C54–C69, C61–C73, and C68–C78. 2 positions are modified to 4-hydroxyproline: P57 and P65. Glycine amide; in form delta-conotoxin PVIA is present on G80.

In terms of processing, the difference between delta-conotoxin PVIA and [deamido]-delta-conotoxin PVIA lies in the state of amidation of Gly-80. As to expression, expressed by the venom duct.

It localises to the secreted. Functionally, delta-conotoxins bind to site 6 of voltage-gated sodium channels (Nav) and inhibit the inactivation process. This toxin shows weak effects on rNav1.2/SCN2A (EC(50)=2.9 uM), rNav1.4/SCN4A (EC(50)=5.2 uM), hNav1.7/SCN9A (EC(50)=1.9 uM) and rNav1.7/SCN9A (EC(50)=6.4 uM). In vivo, this toxin shows different effects. In mice, injection of this toxin causes hyperactivity, rapid running, limb extension, and death. In fish, the peptide elicites spurts of rapid swimming, with twisted motions, quivering fins and the lockjaw extended mouth syndrome. Rigid paralysis and death are observed at higher doses. In mollusks, this peptide is inactive. Injection of this peptide together with the kappa-conotoxin PVIIA causes the sudden tetanus of prey (STOP) syndrome, which is a single, lethal 'fin-pop' in envenomed fish. The sequence is that of Delta-conotoxin PVIA from Conus purpurascens (Purple cone).